A 984-amino-acid polypeptide reads, in one-letter code: Serine/threonine-protein kinase Nek9 (984 aa).

The residue at position 2 (Ser-2) is an N-acetylserine. A phosphoserine mark is found at Ser-2, Ser-13, Ser-16, and Ser-20. Residues 14–43 (INSDFGSESGGGGDSGPGPSAVPGPRAGGG) form a disordered region. Tyr-52 is subject to Phosphotyrosine. The Protein kinase domain maps to 52–308 (YIPIRVLGRG…ADALLDLPLL (257 aa)). Residue 58–66 (LGRGAFGEA) coordinates ATP. At Ser-76 the chain carries Phosphoserine. Lys-81 provides a ligand contact to ATP. Asp-176 functions as the Proton acceptor in the catalytic mechanism. Thr-210 bears the Phosphothreonine; by autocatalysis mark. Thr-254 bears the Phosphothreonine mark. At Ser-331 the chain carries Phosphoserine. The residue at position 333 (Thr-333) is a Phosphothreonine. RCC1 repeat units follow at residues 388-444 (KELY…VTDE), 445-498 (GQLY…LTRN), 499-550 (KEVY…LTQS), 551-615 (GKVL…IDER), 616-668 (GRLL…ATDD), and 669-726 (NHIF…IVEK). Residues 732–896 (TIRSNSSGLS…GKALTSAACA (165 aa)) are interaction with NEK6. At Ser-741 the chain carries Phosphoserine. The tract at residues 744–790 (TVVQSSSPGGGIGGGGGGGGGGGGEEEDSQQESETPDPSGGFRGTME) is disordered. A compositionally biased stretch (gly residues) spans 751 to 766 (PGGGIGGGGGGGGGGG). A compositionally biased stretch (acidic residues) spans 767–778 (GEEEDSQQESET). Phosphoserine is present on residues Ser-808 and Ser-839. Position 891 is a phosphothreonine (Thr-891). Positions 896 to 945 (ACSALQVEVDRLQALVLKCLEEQQKLQQENLQMFTQLQKLNKKLEGGQQV) form a coiled coil. The tract at residues 940–984 (EGGQQVGMHSRGTQTAKEEMEMDPKPDLDSESWCLLGTDSCRPSL) is disordered. Ser-949 carries the post-translational modification Phosphoserine. A compositionally biased stretch (basic and acidic residues) spans 955–967 (AKEEMEMDPKPDL). Ser-983 bears the Phosphoserine mark.

The protein belongs to the protein kinase superfamily. NEK Ser/Thr protein kinase family. NIMA subfamily. Homodimer; homodimerization is required to activate NEK7. Binds to Ran GTPase. Has a greater affinity for Ran-GDP over Ran-GTP. Interacts with SSRP1 and SUPT16H, the 2 subunits of the FACT complex. Interacts with DYNLL1; phosphorylation at Ser-949 strongly reduces DYNLL1 binding. Mg(2+) is required as a cofactor. Autophosphorylated on serine and threonine residues. When complexed with FACT, exhibits markedly elevated phosphorylation on Thr-210. During mitosis, not phosphorylated on Thr-210. Phosphorylated by CDK1 in vitro.

The protein localises to the cytoplasm. Its subcellular location is the nucleus. It carries out the reaction L-seryl-[protein] + ATP = O-phospho-L-seryl-[protein] + ADP + H(+). It catalyses the reaction L-threonyl-[protein] + ATP = O-phospho-L-threonyl-[protein] + ADP + H(+). With respect to regulation, activated during mitosis by intramolecular autophosphorylation. Activity and autophosphorylation is activated by manganese &gt;&gt; magnesium ions. It is not cell-cycle regulated but activity is higher in G0-arrested cells. In terms of biological role, pleiotropic regulator of mitotic progression, participating in the control of spindle dynamics and chromosome separation. Phosphorylates different histones, myelin basic protein, beta-casein, and BICD2. Phosphorylates histone H3 on serine and threonine residues and beta-casein on serine residues. Important for G1/S transition and S phase progression. Phosphorylates NEK6 and NEK7 and stimulates their activity by releasing the autoinhibitory functions of Tyr-108 and Tyr-97 respectively. The chain is Serine/threonine-protein kinase Nek9 from Mus musculus (Mouse).